The sequence spans 248 residues: UPF0246 protein FN1762 (248 aa).

Belongs to the UPF0246 family.

This chain is UPF0246 protein FN1762, found in Fusobacterium nucleatum subsp. nucleatum (strain ATCC 25586 / DSM 15643 / BCRC 10681 / CIP 101130 / JCM 8532 / KCTC 2640 / LMG 13131 / VPI 4355).